We begin with the raw amino-acid sequence, 544 residues long: CTP synthase (544 aa).

The tract at residues 1–266 (MTKFIFVTGG…DDLICERFGL (266 aa)) is amidoligase domain. Serine 13 contributes to the CTP binding site. UTP is bound at residue serine 13. ATP contacts are provided by residues 14–19 (SLGKGI) and aspartate 71. The Mg(2+) site is built by aspartate 71 and glutamate 140. CTP-binding positions include 147–149 (DIE), 187–192 (KTKPTQ), and lysine 223. UTP is bound by residues 187-192 (KTKPTQ) and lysine 223. The region spanning 291–543 (TVAMVGKYVE…VKAAKNYSEA (253 aa)) is the Glutamine amidotransferase type-1 domain. Residue glycine 354 coordinates L-glutamine. The active-site Nucleophile; for glutamine hydrolysis is cysteine 381. Residues 382–385 (LGMQ), glutamate 404, and arginine 471 each bind L-glutamine. Residues histidine 516 and glutamate 518 contribute to the active site.

Belongs to the CTP synthase family. Homotetramer.

The enzyme catalyses UTP + L-glutamine + ATP + H2O = CTP + L-glutamate + ADP + phosphate + 2 H(+). It catalyses the reaction L-glutamine + H2O = L-glutamate + NH4(+). It carries out the reaction UTP + NH4(+) + ATP = CTP + ADP + phosphate + 2 H(+). Its pathway is pyrimidine metabolism; CTP biosynthesis via de novo pathway; CTP from UDP: step 2/2. With respect to regulation, allosterically activated by GTP, when glutamine is the substrate; GTP has no effect on the reaction when ammonia is the substrate. The allosteric effector GTP functions by stabilizing the protein conformation that binds the tetrahedral intermediate(s) formed during glutamine hydrolysis. Inhibited by the product CTP, via allosteric rather than competitive inhibition. Its function is as follows. Catalyzes the ATP-dependent amination of UTP to CTP with either L-glutamine or ammonia as the source of nitrogen. Regulates intracellular CTP levels through interactions with the four ribonucleotide triphosphates. The chain is CTP synthase from Psychrobacter arcticus (strain DSM 17307 / VKM B-2377 / 273-4).